Consider the following 164-residue polypeptide: uncharacterized protein (164 aa).

The region spanning 1–129 (MGEVRVVGIR…AVLAQAGLLI (129 aa)) is the BFN domain.

This is an uncharacterized protein from Mycobacterium tuberculosis (strain CDC 1551 / Oshkosh).